An 844-amino-acid chain; its full sequence is Beta-mannosidase B (844 aa).

Catalysis depends on E432, which acts as the Proton donor. Residue N723 is glycosylated (N-linked (GlcNAc...) asparagine).

It belongs to the glycosyl hydrolase 2 family. Beta-mannosidase B subfamily.

The enzyme catalyses Hydrolysis of terminal, non-reducing beta-D-mannose residues in beta-D-mannosides.. It functions in the pathway glycan metabolism; N-glycan degradation. Its function is as follows. Exoglycosidase that cleaves the single beta-linked mannose residue from the non-reducing end of beta-mannosidic oligosaccharides of various complexity and length. Prefers mannobiose over mannotriose and has no activity against polymeric mannan. Is also severely restricted by galactosyl substitutions at the +1 subsite. This is Beta-mannosidase B (mndB) from Aspergillus niger (strain ATCC MYA-4892 / CBS 513.88 / FGSC A1513).